Consider the following 124-residue polypeptide: uncharacterized protein (124 aa).

The protein belongs to the YciI family.

This is an uncharacterized protein from Rhizobium meliloti (strain 1021) (Ensifer meliloti).